The following is a 256-amino-acid chain: Isoprenyl transferase (256 aa).

Residue aspartate 33 is part of the active site. Residue aspartate 33 participates in Mg(2+) binding. Substrate-binding positions include glycine 34–arginine 37, tryptophan 38, arginine 46, histidine 50, and serine 78–glutamate 80. Residue asparagine 81 is the Proton acceptor of the active site. Substrate contacts are provided by residues tryptophan 82, arginine 84, arginine 201, and arginine 207–serine 209. Glutamate 220 serves as a coordination point for Mg(2+).

The protein belongs to the UPP synthase family. Homodimer. Mg(2+) is required as a cofactor.

Functionally, catalyzes the condensation of isopentenyl diphosphate (IPP) with allylic pyrophosphates generating different type of terpenoids. The chain is Isoprenyl transferase from Staphylococcus epidermidis (strain ATCC 35984 / DSM 28319 / BCRC 17069 / CCUG 31568 / BM 3577 / RP62A).